Reading from the N-terminus, the 340-residue chain is Phosphate carrier protein, mitochondrial (340 aa).

The transit peptide at 1 to 27 (MSVFSQLAESSKQNPFSLPVRSGNCAS) directs the protein to the mitochondrion. 3 Solcar repeats span residues 41 to 125 (KYYA…FKNV), 138 to 222 (YRTS…TVEA), and 239 to 317 (EQLV…VKVA). Helical transmembrane passes span 47–67 (ALGGVLSCGITHTAIVPLDLV), 95–114 (RALVKGWAPTLLGYSAQGLG), 141–161 (SLYLAASASAEFFADILLAPM), 200–220 (PLWMRQIPYTMMKFACFEKTV), 241–261 (LVVTFVAGYIAGVFCAIVSHP), and 297–317 (IIMIGTLTALQWFIYDSVKVA).

It belongs to the mitochondrial carrier (TC 2.A.29) family.

The protein resides in the mitochondrion inner membrane. Its function is as follows. Transport of phosphate groups from the cytosol to the mitochondrial matrix. In Caenorhabditis elegans, this protein is Phosphate carrier protein, mitochondrial.